The primary structure comprises 315 residues: MLRRQFHSGCVQLARTRYTKPKPKNTETRAKEQIRLPTQQTHHSNELRIQPPIPPSTKNIVVPDDHPLWQFFSDKKFMRRPEDLDTTSRAWSIPELRRKSFEDLHSLWYTCLKERNILARENHLLKNAAKNNRNDYEDISEKIRTTMWRIRHVLSERDWAFKRARETFAQNKELQDNLVDDFKKEFLELDSSEDEQAFEMLTRFQEALFGIHEVIEDNVVDRKFVDGLKLVATLKLQRFQSRNDSINAILEESDGQINDVGEAFVVFTADNNLKAVEEACDAIKELRQGENGVSRFDELPTVRGYLKRLVSATTV.

It belongs to the universal ribosomal protein uL29 family. Component of the mitochondrial large ribosomal subunit. Mature mitochondrial ribosomes consist of a small (37S) and a large (54S) subunit. The 37S subunit contains at least 33 different proteins and 1 molecule of RNA (15S). The 54S subunit contains at least 45 different proteins and 1 molecule of RNA (21S).

It is found in the mitochondrion. The protein is Large ribosomal subunit protein uL29m (MRPL4) of Candida glabrata (strain ATCC 2001 / BCRC 20586 / JCM 3761 / NBRC 0622 / NRRL Y-65 / CBS 138) (Yeast).